The following is a 145-amino-acid chain: Partner of bursicon (145 aa).

The signal sequence occupies residues 1–28; sequence MKENFSIMFIHSIFLILIIFIYSNETIA. Cystine bridges form between Cys36–Cys94, Cys60–Cys109, Cys69–Cys135, Cys73–Cys137, and Cys91–Cys140. A CTCK domain is found at 36-131; sequence CETLQSEVHI…NGVMEIKIRE (96 aa).

Heterodimer of burs and pburs.

The protein resides in the secreted. In terms of biological role, final heterodimeric neurohormone released at the end of the molting cycle, involved in the sclerotization (tanning) of the insect cuticle, melanization and wing spreading. This chain is Partner of bursicon (pburs), found in Apis mellifera (Honeybee).